We begin with the raw amino-acid sequence, 364 residues long: Aminomethyltransferase (364 aa).

The protein belongs to the GcvT family. The glycine cleavage system is composed of four proteins: P, T, L and H.

The catalysed reaction is N(6)-[(R)-S(8)-aminomethyldihydrolipoyl]-L-lysyl-[protein] + (6S)-5,6,7,8-tetrahydrofolate = N(6)-[(R)-dihydrolipoyl]-L-lysyl-[protein] + (6R)-5,10-methylene-5,6,7,8-tetrahydrofolate + NH4(+). In terms of biological role, the glycine cleavage system catalyzes the degradation of glycine. This is Aminomethyltransferase from Staphylococcus carnosus (strain TM300).